Reading from the N-terminus, the 168-residue chain is Ubiquitin-conjugating enzyme E2 2 (168 aa).

Positions Pro4–Asn150 constitute a UBC core domain. Cys88 (glycyl thioester intermediate) is an active-site residue. Positions Glu143 to Glu168 are disordered. Acidic residues predominate over residues Trp149–Glu168.

The protein belongs to the ubiquitin-conjugating enzyme family.

Its subcellular location is the cytoplasm. It is found in the nucleus. The enzyme catalyses S-ubiquitinyl-[E1 ubiquitin-activating enzyme]-L-cysteine + [E2 ubiquitin-conjugating enzyme]-L-cysteine = [E1 ubiquitin-activating enzyme]-L-cysteine + S-ubiquitinyl-[E2 ubiquitin-conjugating enzyme]-L-cysteine.. The protein operates within protein modification; protein ubiquitination. Functionally, catalyzes the covalent attachment of ubiquitin to other proteins. Plays a role in transcription regulation by catalyzing the monoubiquitination of histone H2B to form H2BK123ub1. H2BK123ub1 gives a specific tag for epigenetic transcriptional activation and is also a prerequisite for H3K4me and H3K79me formation. Also involved in postreplication repair of UV-damaged DNA, in N-end rule-dependent protein degradation and in sporulation. This Debaryomyces hansenii (strain ATCC 36239 / CBS 767 / BCRC 21394 / JCM 1990 / NBRC 0083 / IGC 2968) (Yeast) protein is Ubiquitin-conjugating enzyme E2 2 (UBC2).